Reading from the N-terminus, the 408-residue chain is uncharacterized protein (408 aa).

A helical transmembrane segment spans residues 56-76 (YWAGPAAASMVAAVTPYVAWL).

This sequence belongs to the mycobacterial PPE family.

It is found in the cell membrane. This is an uncharacterized protein from Mycobacterium bovis (strain ATCC BAA-935 / AF2122/97).